Consider the following 340-residue polypeptide: Agmatinase, mitochondrial (340 aa).

Mn(2+) contacts are provided by His150, Asp173, His175, Asp177, Asp264, and Asp266.

This sequence belongs to the arginase family. Agmatinase subfamily. The cofactor is Mn(2+).

The protein resides in the mitochondrion. The enzyme catalyses agmatine + H2O = urea + putrescine. It participates in amine and polyamine biosynthesis; putrescine biosynthesis via agmatine pathway; putrescine from agmatine: step 1/1. The protein is Agmatinase, mitochondrial (AGMAT) of Gallus gallus (Chicken).